A 97-amino-acid polypeptide reads, in one-letter code: UPF0235 protein PFL_5841 (97 aa).

The protein belongs to the UPF0235 family.

The chain is UPF0235 protein PFL_5841 from Pseudomonas fluorescens (strain ATCC BAA-477 / NRRL B-23932 / Pf-5).